The sequence spans 266 residues: Phosphate import ATP-binding protein PstB 2 (266 aa).

In terms of domain architecture, ABC transporter spans 13–252; sequence LEAQGVNVYY…GPTEEIFQNP (240 aa). 45-52 serves as a coordination point for ATP; sequence GPSGCGKS.

The protein belongs to the ABC transporter superfamily. Phosphate importer (TC 3.A.1.7) family. As to quaternary structure, the complex is composed of two ATP-binding proteins (PstB), two transmembrane proteins (PstC and PstA) and a solute-binding protein (PstS).

The protein resides in the cell inner membrane. It carries out the reaction phosphate(out) + ATP + H2O = ADP + 2 phosphate(in) + H(+). Part of the ABC transporter complex PstSACB involved in phosphate import. Responsible for energy coupling to the transport system. In Synechocystis sp. (strain ATCC 27184 / PCC 6803 / Kazusa), this protein is Phosphate import ATP-binding protein PstB 2.